A 166-amino-acid chain; its full sequence is Putative peptidyl-prolyl cis-trans isomerase dodo (166 aa).

In terms of domain architecture, WW spans 5 to 39 (EQLPDGWEKRTSRSTGMSYYLNMYTKESQWDQPTE). Residues 32-53 (SQWDQPTEPAKKAGGGSAGGGD) are disordered. Positions 44-53 (AGGGSAGGGD) are enriched in gly residues. A PpiC domain is found at 55–166 (PDEVHCLHLL…SGLHIILRKA (112 aa)).

The enzyme catalyses [protein]-peptidylproline (omega=180) = [protein]-peptidylproline (omega=0). The chain is Putative peptidyl-prolyl cis-trans isomerase dodo (dod) from Drosophila melanogaster (Fruit fly).